A 475-amino-acid chain; its full sequence is Probable proline--tRNA ligase, mitochondrial (475 aa).

Residues 1-29 (MEGLLTRCRTLSALAACSLRHCRYIIHKC) constitute a mitochondrion transit peptide.

This sequence belongs to the class-II aminoacyl-tRNA synthetase family.

It localises to the mitochondrion matrix. It catalyses the reaction tRNA(Pro) + L-proline + ATP = L-prolyl-tRNA(Pro) + AMP + diphosphate. Its function is as follows. Mitochondrial aminoacyl-tRNA synthetase that catalyzes the specific attachment of the proline amino acid (aa) to the homologous transfer RNA (tRNA), further participating in protein synthesis. The reaction occurs in a two steps: proline is first activated by ATP to form Pro-AMP and then transferred to the acceptor end of tRNA(Pro). This is Probable proline--tRNA ligase, mitochondrial (Pars2) from Mus musculus (Mouse).